The sequence spans 526 residues: Peptide chain release factor 3 (526 aa).

A tr-type G domain is found at 9–277 (DKRRTFAIIS…GIVEWAPKPL (269 aa)). Residues 18–25 (SHPDAGKT), 86–90 (DTPGH), and 140–143 (NKLD) each bind GTP.

It belongs to the TRAFAC class translation factor GTPase superfamily. Classic translation factor GTPase family. PrfC subfamily.

It localises to the cytoplasm. In terms of biological role, increases the formation of ribosomal termination complexes and stimulates activities of RF-1 and RF-2. It binds guanine nucleotides and has strong preference for UGA stop codons. It may interact directly with the ribosome. The stimulation of RF-1 and RF-2 is significantly reduced by GTP and GDP, but not by GMP. In Shewanella baltica (strain OS155 / ATCC BAA-1091), this protein is Peptide chain release factor 3.